The sequence spans 261 residues: Auxin-responsive protein IAA10 (261 aa).

The interval 1-43 is disordered; it reads MNGLQEVCSSSGSVMIGLPAEEDENAAHSSEDSSCPDESVSET. The EAR-like (transcriptional repression) signature appears at 45–49; that stretch reads LDLAL. The segment at 62 to 90 is disordered; it reads LSSSSSSLTRESGTKRSADSSPAAASNAT. Residues 80–89 show a composition bias toward low complexity; sequence DSSPAAASNA. Positions 151–253 constitute a PB1 domain; it reads SMLVKVTMDG…SVTRLRIMKT (103 aa).

This sequence belongs to the Aux/IAA family. As to quaternary structure, homodimers and heterodimers. Preferentially expressed in vegetative organs.

Its subcellular location is the nucleus. Its function is as follows. Aux/IAA proteins are short-lived transcriptional factors that function as repressors of early auxin response genes at low auxin concentrations. Repression is thought to result from the interaction with auxin response factors (ARFs), proteins that bind to the auxin-responsive promoter element (AuxRE). Formation of heterodimers with ARF proteins may alter their ability to modulate early auxin response genes expression. This Arabidopsis thaliana (Mouse-ear cress) protein is Auxin-responsive protein IAA10 (IAA10).